The sequence spans 103 residues: uncharacterized protein (103 aa).

A helical membrane pass occupies residues 38–58 (FTTLITIYVAAFYTGVIGAAV).

The protein resides in the membrane. This is an uncharacterized protein from Arabidopsis thaliana (Mouse-ear cress).